The chain runs to 372 residues: Probable butyrate kinase (372 aa).

It belongs to the acetokinase family.

It localises to the cytoplasm. The catalysed reaction is butanoate + ATP = butanoyl phosphate + ADP. The sequence is that of Probable butyrate kinase from Oleidesulfovibrio alaskensis (strain ATCC BAA-1058 / DSM 17464 / G20) (Desulfovibrio alaskensis).